The sequence spans 274 residues: Prothoracicostatic peptide (274 aa).

The N-terminal stretch at 1-19 (MRWCLFALWVFGVATVVTA) is a signal peptide. Residues 20–67 (AEEPHHDAAPQTDNEVDLTEDDKRAWSSLHSGWAKRAWQDMSSAWGKR) constitute a propeptide that is removed on maturation. Trp76 is subject to Tryptophan amide. Positions 77–91 (GKRGWQDLNSAWGKR) are excised as a propeptide. Trp100 is subject to Tryptophan amide. Positions 101 to 136 (GKRGWQDLNSAWGKRDDDEAMEKKSWQDLNSVWGKR) are excised as a propeptide. At Trp145 the chain carries Tryptophan amide. Residues 146-148 (GKR) constitute a propeptide that is removed on maturation. Trp157 carries the tryptophan amide modification. Positions 158-172 (GKRGWNDISSVWGKR) are excised as a propeptide. Trp181 bears the Tryptophan amide mark. Positions 182–274 (GKRAWQDMSS…NEHSATTNEA (93 aa)) are excised as a propeptide.

The protein localises to the secreted. Inhibits ecdysteroid biosynthesis in the prothoracic gland of fifth instar larvae, with maximum inhibition during the spinning stage. When administered to day 8 fifth instar larvae it produces a significant delay in the commencement spinning behavior. In Bombyx mori (Silk moth), this protein is Prothoracicostatic peptide.